The primary structure comprises 196 residues: GTP cyclohydrolase 1 (196 aa).

The Zn(2+) site is built by Cys85, His88, and Cys156.

It belongs to the GTP cyclohydrolase I family. As to quaternary structure, toroid-shaped homodecamer, composed of two pentamers of five dimers.

It carries out the reaction GTP + H2O = 7,8-dihydroneopterin 3'-triphosphate + formate + H(+). The protein operates within cofactor biosynthesis; 7,8-dihydroneopterin triphosphate biosynthesis; 7,8-dihydroneopterin triphosphate from GTP: step 1/1. This chain is GTP cyclohydrolase 1, found in Bacteroides thetaiotaomicron (strain ATCC 29148 / DSM 2079 / JCM 5827 / CCUG 10774 / NCTC 10582 / VPI-5482 / E50).